The sequence spans 835 residues: Lon protease (835 aa).

Residues leucine 4–isoleucine 224 form the Lon N-terminal domain. Glycine 412–threonine 419 provides a ligand contact to ATP. The region spanning glutamine 649–alanine 832 is the Lon proteolytic domain. Residues serine 738 and lysine 781 contribute to the active site.

It belongs to the peptidase S16 family. In terms of assembly, homohexamer. Organized in a ring with a central cavity.

The protein localises to the cytoplasm. The catalysed reaction is Hydrolysis of proteins in presence of ATP.. Functionally, ATP-dependent serine protease that mediates the selective degradation of mutant and abnormal proteins as well as certain short-lived regulatory proteins. Required for cellular homeostasis and for survival from DNA damage and developmental changes induced by stress. Degrades polypeptides processively to yield small peptide fragments that are 5 to 10 amino acids long. Binds to DNA in a double-stranded, site-specific manner. The protein is Lon protease of Metamycoplasma arthritidis (strain 158L3-1) (Mycoplasma arthritidis).